A 552-amino-acid polypeptide reads, in one-letter code: Steroid transmembrane transporter SLC22A24 (552 aa).

The next 12 membrane-spanning stretches (helical) occupy residues 16 to 36 (FQICLIAFFCITNILLFPNIV), 146 to 166 (SMVQSLFMAGSLLGGLIYGHL), 178 to 200 (LCFLQLAISNTCAAFAPTFLVYC), 204 to 226 (FLAGFSTMTILGNTFILSLEWTL), 234 to 254 (IMVLLCSYSVGQMLLGGLAFA), 260 to 280 (ILQLTVSTPIIVLFLSSWKMV), 350 to 370 (VFGLCFVRFAITVPFYGLILN), 380 to 400 (LFQILCGAVTFTARCVSLLTL), 407 to 427 (ISQILFTFPVGLFILVNTFLP), 435 to 455 (VVLATLGIGSVSAASNSASVH), 474 to 492 (VSGRTGAALAPLLMTLMAY), and 496 to 516 (LPWISYGVFPILAVPVILLLP).

This sequence belongs to the major facilitator (TC 2.A.1) superfamily. Organic cation transporter (TC 2.A.1.19) family. Localized to the kidney. Highly specific expression pattern in the nephron, localized to segment 3 of the proximal tubule.

The protein resides in the cell membrane. The catalysed reaction is estrone 3-sulfate(out) + glutarate(in) = estrone 3-sulfate(in) + glutarate(out). The enzyme catalyses 17beta-estradiol 17-O-(beta-D-glucuronate)(out) + glutarate(in) = 17beta-estradiol 17-O-(beta-D-glucuronate)(in) + glutarate(out). It carries out the reaction taurocholate(out) + glutarate(in) = taurocholate(in) + glutarate(out). It catalyses the reaction 5alpha-androstane-3alpha,17beta-diol 3-O-(beta-D-glucuronate)(out) + glutarate(in) = 5alpha-androstane-3alpha,17beta-diol 3-O-(beta-D-glucuronate)(in) + glutarate(out). The catalysed reaction is glycocholate(out) + glutarate(in) = glycocholate(in) + glutarate(out). The enzyme catalyses dehydroepiandrosterone 3-sulfate(out) + glutarate(in) = dehydroepiandrosterone 3-sulfate(in) + glutarate(out). It carries out the reaction glutarate(in) + succinate(out) = glutarate(out) + succinate(in). With respect to regulation, transport is chloride sensitive and transtimulated by glutaric acid. Transport is inhibited by anionic compounds from different chemical classes. Its function is as follows. Renal transmembrane organic anion/dicarboxylate exchanger that participates in the reabsorption of conjugated steroids including estradiol-17beta-D-glucuronide (or 17beta-estradiol 17-O-(beta-D-glucuronate)), androstanediol glucuronide (or 5alpha-androstane-3alpha,17beta-diol 3-O-(beta-D-glucuronate)), and estrone 3-sulfate, as well as bile acids taurocholate and glycocholate, driven by an outward gradient of dicarboxylates such as glutarate or succinate. Functionally, similar uptake function as Isoform 1. Lack of transporter activity. In Homo sapiens (Human), this protein is Steroid transmembrane transporter SLC22A24.